Reading from the N-terminus, the 28-residue chain is Omega-agatoxin-Aa2a (28 aa).

This sequence belongs to the neurotoxin 04 (omega-agtx) family. 03 (type II/III omega-agtx) subfamily. Expressed by the venom gland.

The protein localises to the secreted. Functionally, omega-agatoxin are antagonist of voltage-gated calcium channels. They block insect neuromuscular transmission presynaptically. Potent blocker of N-type calcium channels (Cav2.2/CACNA1B). This chain is Omega-agatoxin-Aa2a, found in Agelenopsis aperta (North American funnel-web spider).